The sequence spans 363 residues: SWIRM domain-containing protein YOR338W (363 aa).

Disordered stretches follow at residues 1-22 (MLDNMQFHSPAPEHPQLNGGIN) and 186-208 (LYEDDGNRSENYDEESAQEVPVR). Positions 186-196 (LYEDDGNRSEN) are enriched in basic and acidic residues. Residues 266–363 (LKVEWKGSPM…LQDKHFEKYL (98 aa)) form the SWIRM domain.

The polypeptide is SWIRM domain-containing protein YOR338W (Saccharomyces cerevisiae (strain ATCC 204508 / S288c) (Baker's yeast)).